The primary structure comprises 222 residues: LexA repressor (222 aa).

A DNA-binding region (H-T-H motif) is located at residues Ile28–Lys48. Catalysis depends on for autocatalytic cleavage activity residues Ser135 and Lys172.

It belongs to the peptidase S24 family. As to quaternary structure, homodimer.

It carries out the reaction Hydrolysis of Ala-|-Gly bond in repressor LexA.. Functionally, represses a number of genes involved in the response to DNA damage (SOS response), including recA and lexA. In the presence of single-stranded DNA, RecA interacts with LexA causing an autocatalytic cleavage which disrupts the DNA-binding part of LexA, leading to derepression of the SOS regulon and eventually DNA repair. This Myxococcus xanthus (strain DK1622) protein is LexA repressor.